Reading from the N-terminus, the 197-residue chain is U1 small nuclear ribonucleoprotein C (197 aa).

The Matrin-type zinc-finger motif lies at Y4–E36. A compositionally biased stretch (low complexity) spans F128–I137. The segment at F128 to N178 is disordered. Residues N142–Y154 show a composition bias toward polar residues. Residues N164–N178 are compositionally biased toward low complexity.

Belongs to the U1 small nuclear ribonucleoprotein C family. In terms of assembly, U1 snRNP is composed of the 7 core Sm proteins B/B', D1, D2, D3, E, F and G that assemble in a heptameric protein ring on the Sm site of the small nuclear RNA to form the core snRNP, and at least 3 U1 snRNP-specific proteins U1-70K, U1-A and U1-C. U1-C interacts with U1 snRNA and the 5' splice-site region of the pre-mRNA.

The protein resides in the nucleus. Functionally, component of the spliceosomal U1 snRNP, which is essential for recognition of the pre-mRNA 5' splice-site and the subsequent assembly of the spliceosome. U1-C is directly involved in initial 5' splice-site recognition for both constitutive and regulated alternative splicing. The interaction with the 5' splice-site seems to precede base-pairing between the pre-mRNA and the U1 snRNA. Stimulates commitment or early (E) complex formation by stabilizing the base pairing of the 5' end of the U1 snRNA and the 5' splice-site region. The protein is U1 small nuclear ribonucleoprotein C (SNRPC) of Plasmodium berghei (strain Anka).